The sequence spans 350 residues: Phosphoribosylformylglycinamidine cyclo-ligase (350 aa).

The protein belongs to the AIR synthase family.

Its subcellular location is the cytoplasm. It carries out the reaction 2-formamido-N(1)-(5-O-phospho-beta-D-ribosyl)acetamidine + ATP = 5-amino-1-(5-phospho-beta-D-ribosyl)imidazole + ADP + phosphate + H(+). It functions in the pathway purine metabolism; IMP biosynthesis via de novo pathway; 5-amino-1-(5-phospho-D-ribosyl)imidazole from N(2)-formyl-N(1)-(5-phospho-D-ribosyl)glycinamide: step 2/2. The sequence is that of Phosphoribosylformylglycinamidine cyclo-ligase from Syntrophotalea carbinolica (strain DSM 2380 / NBRC 103641 / GraBd1) (Pelobacter carbinolicus).